A 447-amino-acid chain; its full sequence is Tubulin beta-1 chain (447 aa).

GTP is bound by residues glutamine 11, glutamate 69, serine 138, glycine 142, threonine 143, glycine 144, asparagine 204, and asparagine 226. Glutamate 69 serves as a coordination point for Mg(2+).

It belongs to the tubulin family. In terms of assembly, dimer of alpha and beta chains. A typical microtubule is a hollow water-filled tube with an outer diameter of 25 nm and an inner diameter of 15 nM. Alpha-beta heterodimers associate head-to-tail to form protofilaments running lengthwise along the microtubule wall with the beta-tubulin subunit facing the microtubule plus end conferring a structural polarity. Microtubules usually have 13 protofilaments but different protofilament numbers can be found in some organisms and specialized cells. Mg(2+) is required as a cofactor.

The protein resides in the cytoplasm. It localises to the cytoskeleton. Its function is as follows. Tubulin is the major constituent of microtubules, a cylinder consisting of laterally associated linear protofilaments composed of alpha- and beta-tubulin heterodimers. Microtubules grow by the addition of GTP-tubulin dimers to the microtubule end, where a stabilizing cap forms. Below the cap, tubulin dimers are in GDP-bound state, owing to GTPase activity of alpha-tubulin. This is Tubulin beta-1 chain from Geotrichum candidum (Oospora lactis).